The sequence spans 248 residues: MWLGVITLFPEMFRAVTDFGVTGRAVKNGLLEVQTWNPRDFTHDRHNTVDDRPYGGGPGMLMMVQPLRDAIHAAKAAAGDRAKVIYLSPQGRKLDQHGVTELAKSECLILVCGRYEGVDERIIQTEVDEEWSIGDYVLSGGELPAMTLIDSVARLVPGVLGKQASAEQDSFSDGLLDCPHYTRPEQLDGLDVPAVLLSGDHEKIRLWRLQQSIGRTFLRRPELFENLALTDEQTTLLAQFVNETDKSA.

Residues glycine 113 and 133 to 138 (IGDYVL) contribute to the S-adenosyl-L-methionine site.

Belongs to the RNA methyltransferase TrmD family. Homodimer.

Its subcellular location is the cytoplasm. The enzyme catalyses guanosine(37) in tRNA + S-adenosyl-L-methionine = N(1)-methylguanosine(37) in tRNA + S-adenosyl-L-homocysteine + H(+). In terms of biological role, specifically methylates guanosine-37 in various tRNAs. The chain is tRNA (guanine-N(1)-)-methyltransferase from Shewanella frigidimarina (strain NCIMB 400).